We begin with the raw amino-acid sequence, 177 residues long: Photosystem I assembly protein Ycf4 (177 aa).

Helical transmembrane passes span 20–40 (VALL…SSYF) and 60–80 (LVMG…WAVI).

It belongs to the Ycf4 family.

The protein localises to the cellular thylakoid membrane. Seems to be required for the assembly of the photosystem I complex. This is Photosystem I assembly protein Ycf4 from Synechococcus sp. (strain RCC307).